A 770-amino-acid chain; its full sequence is DNA topoisomerase 1 (770 aa).

In terms of domain architecture, Toprim spans 4–140 (FRIIIAEKAD…EIRRAKFSAL (137 aa)). The Mg(2+) site is built by Glu-10 and Asp-109. The 408-residue stretch at 156–563 (NYSLADAADA…ESKKMLHEVL (408 aa)) folds into the Topo IA-type catalytic domain. The interaction with DNA stretch occupies residues 194 to 199 (SAGRVQ). Catalysis depends on Tyr-312, which acts as the O-(5'-phospho-DNA)-tyrosine intermediate. 3 C4-type zinc fingers span residues 611 to 638 (CEDPSCKINFRIKRNGSITLSDQKCPVC), 673 to 700 (CPADHGRLVLRQSKYGKRFLGCSNYPKC), and 719 to 744 (CPYCGAPILALSRNGRKWKFCPNMQC).

Belongs to the type IA topoisomerase family. In terms of assembly, monomer. The cofactor is Mg(2+).

It catalyses the reaction ATP-independent breakage of single-stranded DNA, followed by passage and rejoining.. Its function is as follows. Releases the supercoiling and torsional tension of DNA, which is introduced during the DNA replication and transcription, by transiently cleaving and rejoining one strand of the DNA duplex. Introduces a single-strand break via transesterification at a target site in duplex DNA. The scissile phosphodiester is attacked by the catalytic tyrosine of the enzyme, resulting in the formation of a DNA-(5'-phosphotyrosyl)-enzyme intermediate and the expulsion of a 3'-OH DNA strand. The free DNA strand then undergoes passage around the unbroken strand, thus removing DNA supercoils. Finally, in the religation step, the DNA 3'-OH attacks the covalent intermediate to expel the active-site tyrosine and restore the DNA phosphodiester backbone. This Thermoplasma acidophilum (strain ATCC 25905 / DSM 1728 / JCM 9062 / NBRC 15155 / AMRC-C165) protein is DNA topoisomerase 1.